Consider the following 1043-residue polypeptide: RNA cytidine acetyltransferase (1043 aa).

ATP-binding positions include 285 to 294 (GRGKSAAVGL) and arginine 462. One can recognise an N-acetyltransferase domain in the interval 551 to 736 (VLMAPIDKSR…VPVYIRQNSN (186 aa)). Residues 622–624 (VAV), 629–635 (QSMGYGG), and arginine 723 each bind acetyl-CoA. The disordered stretch occupies residues 1020-1043 (IPDAKDPANKNAKKKKRFSSGGRR). Basic residues predominate over residues 1030-1043 (NAKKKKRFSSGGRR).

Belongs to the RNA cytidine acetyltransferase family. NAT10 subfamily. Part of the small subunit (SSU) processome, composed of more than 70 proteins and the RNA chaperone small nucleolar RNA (snoRNA) U3.

The protein localises to the nucleus. The protein resides in the nucleolus. The enzyme catalyses a cytidine in 18S rRNA + acetyl-CoA + ATP + H2O = an N(4)-acetylcytidine in 18S rRNA + ADP + phosphate + CoA + H(+). The catalysed reaction is a cytidine in tRNA + acetyl-CoA + ATP + H2O = an N(4)-acetylcytidine in tRNA + ADP + phosphate + CoA + H(+). RNA cytidine acetyltransferase with specificity toward both 18S rRNA and tRNAs. Catalyzes the formation of N(4)-acetylcytidine (ac4C) in 18S rRNA. Required for early nucleolar cleavages of precursor rRNA at sites A0, A1 and A2 during 18S rRNA synthesis. Catalyzes the formation of ac4C in serine and leucine tRNAs. Requires a tRNA-binding adapter protein for full tRNA acetyltransferase activity but not for 18S rRNA acetylation. Part of the small subunit (SSU) processome, first precursor of the small eukaryotic ribosomal subunit. During the assembly of the SSU processome in the nucleolus, many ribosome biogenesis factors, an RNA chaperone and ribosomal proteins associate with the nascent pre-rRNA and work in concert to generate RNA folding, modifications, rearrangements and cleavage as well as targeted degradation of pre-ribosomal RNA by the RNA exosome. In Caenorhabditis elegans, this protein is RNA cytidine acetyltransferase.